Reading from the N-terminus, the 216-residue chain is Large ribosomal subunit protein uL3 (216 aa).

The interval 132–155 (QDASHGNSRSHRVPGSIGQNQTPG) is disordered. At Q152 the chain carries N5-methylglutamine.

This sequence belongs to the universal ribosomal protein uL3 family. In terms of assembly, part of the 50S ribosomal subunit. Forms a cluster with proteins L14 and L19. Methylated by PrmB.

Its function is as follows. One of the primary rRNA binding proteins, it binds directly near the 3'-end of the 23S rRNA, where it nucleates assembly of the 50S subunit. The protein is Large ribosomal subunit protein uL3 of Legionella pneumophila (strain Paris).